Reading from the N-terminus, the 193-residue chain is NAD(P)H-quinone oxidoreductase subunit I (193 aa).

4Fe-4S ferredoxin-type domains follow at residues 55 to 84 and 95 to 124; these read GRIH…VDWE and KHYS…MTEE. [4Fe-4S] cluster contacts are provided by C64, C67, C70, C74, C104, C107, C110, and C114. The tract at residues 169–193 is disordered; that stretch reads LDPHDLPSGNQRSGKRPEEIIAESD.

This sequence belongs to the complex I 23 kDa subunit family. In terms of assembly, NDH-1 is composed of at least 11 different subunits. It depends on [4Fe-4S] cluster as a cofactor.

It is found in the cellular thylakoid membrane. The catalysed reaction is a plastoquinone + NADH + (n+1) H(+)(in) = a plastoquinol + NAD(+) + n H(+)(out). It carries out the reaction a plastoquinone + NADPH + (n+1) H(+)(in) = a plastoquinol + NADP(+) + n H(+)(out). Its function is as follows. NDH-1 shuttles electrons from an unknown electron donor, via FMN and iron-sulfur (Fe-S) centers, to quinones in the respiratory and/or the photosynthetic chain. The immediate electron acceptor for the enzyme in this species is believed to be plastoquinone. Couples the redox reaction to proton translocation, and thus conserves the redox energy in a proton gradient. This Rippkaea orientalis (strain PCC 8801 / RF-1) (Cyanothece sp. (strain PCC 8801)) protein is NAD(P)H-quinone oxidoreductase subunit I.